Reading from the N-terminus, the 633-residue chain is Polypeptide N-acetylgalactosaminyltransferase 3 (633 aa).

Residues 1 to 19 (MAHLKRLVKLHIKRHYHRK) are Cytoplasmic-facing. Residues 20-37 (FWKLGAVIFFFLVVLILM) traverse the membrane as a helical; Signal-anchor for type II membrane protein segment. The Lumenal segment spans residues 38–633 (QREVSVQYSK…LQKWIFSQND (596 aa)). Residues 112–145 (DRPPQDSNAPGASGKPFKITHLSPEEQKEKERGE) are disordered. Residues 134–145 (SPEEQKEKERGE) show a composition bias toward basic and acidic residues. The tract at residues 184-293 (LPTTSVIIVF…YGWLEPLLAR (110 aa)) is catalytic subdomain A. Residues D277 and H279 each contribute to the Mn(2+) site. N-linked (GlcNAc...) asparagine glycosylation occurs at N297. The catalytic subdomain B stretch occupies residues 356-418 (PIKTPTFAGG…PCSVVGHVFR (63 aa)). Position 415 (H415) interacts with Mn(2+). N484 carries an N-linked (GlcNAc...) asparagine glycan. The region spanning 504–630 (VISGYIKSVG…TDLLQKWIFS (127 aa)) is the Ricin B-type lectin domain. A disulfide bond links C517 and C535. Residues D519, E522, H536, and N541 each coordinate UDP-N-acetyl-alpha-D-galactosamine. 2 cysteine pairs are disulfide-bonded: C561–C574 and C605–C618.

This sequence belongs to the glycosyltransferase 2 family. GalNAc-T subfamily. Requires Mn(2+) as cofactor. In terms of tissue distribution, highly expressed in the reproductive tract, principally in the testis and uterus, and to a lesser degree in the cervix with only trace levels in the ovary. Also expressed at high level in sublingual gland, stomach and colon, with more moderate amounts present in the submandibular and parotid gland as well as the kidney.

It is found in the golgi apparatus. It localises to the golgi stack membrane. The catalysed reaction is L-seryl-[protein] + UDP-N-acetyl-alpha-D-galactosamine = a 3-O-[N-acetyl-alpha-D-galactosaminyl]-L-seryl-[protein] + UDP + H(+). The enzyme catalyses L-threonyl-[protein] + UDP-N-acetyl-alpha-D-galactosamine = a 3-O-[N-acetyl-alpha-D-galactosaminyl]-L-threonyl-[protein] + UDP + H(+). It functions in the pathway protein modification; protein glycosylation. Catalyzes the initial reaction in O-linked oligosaccharide biosynthesis, the transfer of an N-acetyl-D-galactosamine residue to a serine or threonine residue on the protein receptor. Has activity toward HIV envelope glycoprotein gp120. Has activity towards EA2, MUC2 and MUC5. Probably glycosylates fibronectin in vivo. Glycosylates FGF23. The chain is Polypeptide N-acetylgalactosaminyltransferase 3 (Galnt3) from Mus musculus (Mouse).